A 222-amino-acid polypeptide reads, in one-letter code: Glutathione S-transferase alpha-4 (222 aa).

Methionine 1 is subject to N-acetylmethionine. Residues valine 3–glycine 83 enclose the GST N-terminal domain. Glutathione contacts are provided by residues tyrosine 9, glutamine 54–valine 55, and glutamine 67–threonine 68. The region spanning aspartate 85–proline 208 is the GST C-terminal domain.

It belongs to the GST superfamily. Alpha family. As to quaternary structure, homodimer.

The protein resides in the cytoplasm. The enzyme catalyses RX + glutathione = an S-substituted glutathione + a halide anion + H(+). In terms of biological role, conjugation of reduced glutathione to a wide number of exogenous and endogenous hydrophobic electrophiles. This Rattus norvegicus (Rat) protein is Glutathione S-transferase alpha-4 (Gsta4).